Here is a 285-residue protein sequence, read N- to C-terminus: tRNA uridine(34) hydroxylase (285 aa).

One can recognise a Rhodanese domain in the interval 130-225; it reads RGDDVVFFDG…YGEAFGDTGL (96 aa). The active-site Cysteine persulfide intermediate is the C185.

The protein belongs to the TrhO family.

The catalysed reaction is uridine(34) in tRNA + AH2 + O2 = 5-hydroxyuridine(34) in tRNA + A + H2O. In terms of biological role, catalyzes oxygen-dependent 5-hydroxyuridine (ho5U) modification at position 34 in tRNAs. The protein is tRNA uridine(34) hydroxylase of Rhodococcus opacus (strain B4).